Here is a 392-residue protein sequence, read N- to C-terminus: tRNA (guanine-N(7)-)-methyltransferase (392 aa).

Glu123, Glu148, and Asp175 together coordinate S-adenosyl-L-methionine. Substrate-binding residues include Lys201 and Asp231.

It belongs to the class I-like SAM-binding methyltransferase superfamily. TrmB family.

The catalysed reaction is guanosine(46) in tRNA + S-adenosyl-L-methionine = N(7)-methylguanosine(46) in tRNA + S-adenosyl-L-homocysteine. It participates in tRNA modification; N(7)-methylguanine-tRNA biosynthesis. Catalyzes the formation of N(7)-methylguanine at position 46 (m7G46) in tRNA. This chain is tRNA (guanine-N(7)-)-methyltransferase, found in Campylobacter jejuni subsp. doylei (strain ATCC BAA-1458 / RM4099 / 269.97).